A 166-amino-acid chain; its full sequence is Cofilin-1 (166 aa).

An N-acetylalanine modification is found at A2. 2 positions are modified to phosphoserine: S3 and S8. An ADF-H domain is found at 4-153 (GVAVSDGVIK…KDRCTLAEKL (150 aa)). An N6-acetyllysine modification is found at K13. T25 is subject to Phosphothreonine. The Nuclear localization signal signature appears at 30–34 (KKRKK). At S41 the chain carries Phosphoserine. At Y68 the chain carries Phosphotyrosine. K73 bears the N6-acetyllysine mark. K132 participates in a covalent cross-link: Glycyl lysine isopeptide (Lys-Gly) (interchain with G-Cter in SUMO2). The residue at position 140 (Y140) is a Phosphotyrosine. An N6-acetyllysine modification is found at K144. S156 is subject to Phosphoserine.

Belongs to the actin-binding proteins ADF family. In terms of assembly, can bind G- and F-actin in a 1:1 ratio of cofilin to actin. It is a major component of intranuclear and cytoplasmic actin rods. Interacts with the subcortical maternal complex (SCMC) via interaction with TLE6 and NLRP5. Interacts with C9orf72. Post-translationally, inactivated by phosphorylation on Ser-3. Phosphorylated on Ser-3 in resting cells. Dephosphorylated by PDXP/chronophin; this restores its activity in promoting actin filament depolymerization. The phosphorylation of Ser-24 may prevent recognition of the nuclear localization signal. Phosphorylated via a ARRB1-RAC1-LIMK1-PAK1 cascade upon active ligand stimulation of atypical chemokine receptor ACKR2.

The protein localises to the nucleus matrix. Its subcellular location is the cytoplasm. The protein resides in the cytoskeleton. It localises to the cell projection. It is found in the ruffle membrane. The protein localises to the lamellipodium membrane. Its subcellular location is the lamellipodium. The protein resides in the growth cone. It localises to the axon. In terms of biological role, binds to F-actin and exhibits pH-sensitive F-actin depolymerizing activity. Important for normal progress through mitosis and normal cytokinesis. In conjunction with the subcortical maternal complex (SCMC), plays an essential role for zygotes to progress beyond the first embryonic cell divisions via regulation of actin dynamics. Required for the centralization of the mitotic spindle and symmetric division of zygotes. Plays a role in the regulation of cell morphology and cytoskeletal organization in epithelial cells. Required for the up-regulation of atypical chemokine receptor ACKR2 from endosomal compartment to cell membrane, increasing its efficiency in chemokine uptake and degradation. Required for neural tube morphogenesis and neural crest cell migration. The protein is Cofilin-1 (CFL1) of Bos taurus (Bovine).